A 657-amino-acid chain; its full sequence is Transcription factor 12 (657 aa).

Positions 1-20 (MDEKGGTTSWGTSGQPSPSY) are enriched in polar residues. Disordered stretches follow at residues 1–76 (MDEK…SGLS), 89–285 (LGSP…QTGD), 297–340 (PDHT…YENS), 459–555 (VSAQ…ERRM), and 628–657 (KVSA…MGHM). The segment covering 30-43 (HYSDHLNDSRKGTH) has biased composition (basic and acidic residues). Composition is skewed to polar residues over residues 49–70 (TPFS…SLYS) and 93–112 (AQLS…SATS). The leucine-zipper stretch occupies residues 68–89 (LYSRDSGLSGCQSSLLRQELGL). The Nuclear localization signal signature appears at 130–136 (KKVRKVP). Polar residues-rich tracts occupy residues 168–193 (MFAS…NGMS), 202–216 (GTST…SYGS), and 230–254 (VSPT…SSSP). Low complexity predominate over residues 300 to 311 (TSSSFPSNPSTP). Polar residues predominate over residues 312 to 340 (VGSPSPLTGASQWSRSGGQAPSSPNYENS). Basic and acidic residues-rich tracts occupy residues 493–505 (IKSE…ENIH), 511–526 (DDMK…DIKV), and 543–555 (PEQK…ERRM). In terms of domain architecture, bHLH spans 552–605 (ERRMANNARERLRVRDINEAFKELGRMCQLHLKSEKPQTKLLILHQAVAVILSL). Positions 607–630 (QQVRERNLNPKAACLKRREEEKVS) are class A specific domain. Over residues 648–657 (SETTNPMGHM) the composition is skewed to polar residues.

Efficient DNA binding requires dimerization with another bHLH protein. Forms homo- or heterooligomers with myogenin, E12 and ITF2 proteins.

The protein resides in the nucleus. Functionally, transcriptional regulator. Involved in the initiation of neuronal differentiation. Activates transcription by binding to the E box-containing promoter. This Gallus gallus (Chicken) protein is Transcription factor 12 (TCF12).